Here is a 559-residue protein sequence, read N- to C-terminus: Chaperonin GroEL 1 (559 aa).

ATP contacts are provided by residues 29-32 (TIGP), 86-90 (DGTTT), Gly-413, 476-478 (NAL), and Asp-492. The interval 521–541 (KPEPPAPAPAGDGDPMGGMGG) is disordered.

This sequence belongs to the chaperonin (HSP60) family. In terms of assembly, forms a cylinder of 14 subunits composed of two heptameric rings stacked back-to-back. Interacts with the co-chaperonin GroES.

The protein localises to the cytoplasm. It carries out the reaction ATP + H2O + a folded polypeptide = ADP + phosphate + an unfolded polypeptide.. Its function is as follows. Together with its co-chaperonin GroES, plays an essential role in assisting protein folding. The GroEL-GroES system forms a nano-cage that allows encapsulation of the non-native substrate proteins and provides a physical environment optimized to promote and accelerate protein folding. This chain is Chaperonin GroEL 1, found in Synechococcus sp. (strain CC9605).